Reading from the N-terminus, the 60-residue chain is Ras-related protein Rab-2A (60 aa).

Ser1, Cys2, and Thr19 together coordinate GTP. A Mg(2+)-binding site is contributed by Ser1. Residues 16 to 24 (HDLTIGVEF) carry the Effector region motif. Thr19 lines the Mg(2+) pocket.

Belongs to the small GTPase superfamily. Rab family. As to quaternary structure, interacts with PRKCI. Interacts with TRIP11. Interacts (in GTP-bound form) with GARIN1B. Interacts (GTP-bound) with HOPS complex component VPS39; interaction contributes to obtaining a functional HOPS complex that promotes autophagosome-lysosome membrane fusion driven by STX17-SNAP29-VAMP8. May interact with VPS41. Requires Mg(2+) as cofactor. Post-translationally, prenylated. Prenylation is required for association with cellular membranes.

The protein localises to the endoplasmic reticulum-Golgi intermediate compartment membrane. The protein resides in the melanosome. Its subcellular location is the endoplasmic reticulum membrane. It localises to the golgi apparatus membrane. It is found in the cytoplasmic vesicle. The protein localises to the secretory vesicle. The protein resides in the acrosome. Its subcellular location is the autophagosome membrane. The catalysed reaction is GTP + H2O = GDP + phosphate + H(+). Regulated by guanine nucleotide exchange factors (GEFs) which promote the exchange of bound GDP for free GTP, GTPase activating proteins (GAPs) which increase the GTP hydrolysis activity, and GDP dissociation inhibitors (GDIs) which inhibit the dissociation of the nucleotide from the GTPase. In terms of biological role, the small GTPases Rab are key regulators of intracellular membrane trafficking, from the formation of transport vesicles to their fusion with membranes. Rabs cycle between active GTP-bound and inactive GDP-bound states. In their active state, drive transport of vesicular carriers from donor organelles to acceptor organelles to regulate the membrane traffic that maintains organelle identity and morphology. RAB2A regulates autophagy by promoting autophagosome-lysosome fusion via recruitment of the HOPS endosomal tethering complex; this process involves autophagosomal RAB2A and lysosomal RAB39A recruitment of HOPS subcomplexes VPS39-VPS11 and VPS41-VPS16-VPS18-VPS33A, respectively, which assemble into a functional complex to mediate membrane tethering and SNAREs-driven membrane fusion. Required for protein transport from the endoplasmic reticulum to the Golgi complex. Regulates the compacted morphology of the Golgi. Together with RAB2B, redundantly required for efficient autophagic flux. In Mesocricetus auratus (Golden hamster), this protein is Ras-related protein Rab-2A.